The sequence spans 469 residues: GTPase Der (469 aa).

2 EngA-type G domains span residues 3–166 (PVIA…PEDE) and 177–350 (LRLA…ESAN). Residues 9–16 (GRPNVGKS), 56–60 (DTGGI), 118–121 (NKVD), 183–190 (GRPNVGKS), 230–234 (DTAGV), and 295–298 (NKWD) contribute to the GTP site. Residues 351–435 (LKVSPAKLTQ…PVKIEFKTSE (85 aa)) form the KH-like domain.

The protein belongs to the TRAFAC class TrmE-Era-EngA-EngB-Septin-like GTPase superfamily. EngA (Der) GTPase family. In terms of assembly, associates with the 50S ribosomal subunit.

GTPase that plays an essential role in the late steps of ribosome biogenesis. The polypeptide is GTPase Der (Acinetobacter baumannii (strain ACICU)).